The following is a 166-amino-acid chain: MSEPTSSRPAYARLLDRAVRILAVRDHSEQELRRKLSAPVMGKNGPEEIDATADDYERVIAWCHEHHYLDDERFVMRFIASRSRKGYGPARIRQELNQKGISRESTEKTMRECEIDWSEMAREQAVRKYGEPLPSNFSEKVKVQRFLLYRGYLMDDIQQIWRNFAD.

It belongs to the RecX family.

The protein localises to the cytoplasm. In terms of biological role, modulates RecA activity. This Salmonella newport (strain SL254) protein is Regulatory protein RecX.